Reading from the N-terminus, the 619-residue chain is Nucleolar GTP-binding protein 2 (619 aa).

Residues 1–10 (MGTGKKEKSR) show a composition bias toward basic and acidic residues. The disordered stretch occupies residues 1-24 (MGTGKKEKSRIQRQGKVTGDPKVK). A CP-type G domain is found at 222-383 (WNELYKVIDS…LIDCPGIVPP (162 aa)). GTP-binding positions include 332–339 (GYPNVGKS) and 376–380 (DCPGI). Residues 473-619 (PWFTPAPEKE…PPKKQRRSRK (147 aa)) are disordered. Positions 489 to 500 (MEGREGRYGEMS) are enriched in basic and acidic residues. The span at 536 to 546 (SDSDSEVEEAA) shows a compositional bias: acidic residues. The segment covering 547 to 556 (EEKGEEKSTA) has biased composition (basic and acidic residues). Acidic residues predominate over residues 565–603 (SSDEEEDGEEEGSDVEDDEEGSDLDIEGASELEESESEA).

Belongs to the TRAFAC class YlqF/YawG GTPase family. NOG2 subfamily.

The protein resides in the nucleus. It localises to the nucleolus. In terms of biological role, GTPase that associates with pre-60S ribosomal subunits in the nucleolus and is required for their nuclear export and maturation. The chain is Nucleolar GTP-binding protein 2 (nog-2) from Neurospora crassa (strain ATCC 24698 / 74-OR23-1A / CBS 708.71 / DSM 1257 / FGSC 987).